We begin with the raw amino-acid sequence, 476 residues long: Ureidoglycolate hydrolase (476 aa).

The N-terminal stretch at 1–25 is a signal peptide; the sequence is MESLKRFLCSIALLLISLLLPSSLA. Residues histidine 138, aspartate 149, glutamate 184, and histidine 254 each coordinate Mn(2+). Substrate contacts are provided by residues 183-184, 254-257, histidine 290, asparagine 340, arginine 353, 423-424, and histidine 448; these read EE, HIEQ, and YH. The segment at 276–391 is involved in dimerization; sequence APASLKVEFE…LSEFKIVNQD (116 aa). Histidine 448 is a Mn(2+) binding site.

Belongs to the peptidase M20 family. Homodimer. It depends on Mn(2+) as a cofactor. Ni(2+) is required as a cofactor. Requires Co(2+) as cofactor.

The protein resides in the endoplasmic reticulum. It carries out the reaction (S)-ureidoglycolate + H2O + 2 H(+) = glyoxylate + 2 NH4(+) + CO2. It participates in nitrogen metabolism; (S)-allantoin degradation; glyoxylate from (S)-ureidoglycolate: step 1/1. Its function is as follows. Involved in the catabolism of purine nucleotides. Can use (S)-ureidoglycolate as substrate, but not (R)-ureidoglycolate or allantoate. The sequential activity of AAH, UGLYAH and UAH allows a complete purine breakdown without the intermediate generation of urea. The polypeptide is Ureidoglycolate hydrolase (Arabidopsis thaliana (Mouse-ear cress)).